The chain runs to 190 residues: Adenylate kinase (190 aa).

Residue 10–15 (AAGKGT) coordinates ATP. An NMP region spans residues 30–59 (STGDMLRAAIASGSELGQRVSGIMERGELV). AMP-binding positions include threonine 31, arginine 36, 57-59 (ELV), 85-88 (GFPR), and glutamine 92. Residues 126–136 (GRFAESGRADD) are LID. Residue arginine 127 coordinates ATP. The AMP site is built by arginine 133 and arginine 144. Residue glycine 172 coordinates ATP.

It belongs to the adenylate kinase family. As to quaternary structure, monomer.

The protein localises to the cytoplasm. It catalyses the reaction AMP + ATP = 2 ADP. Its pathway is purine metabolism; AMP biosynthesis via salvage pathway; AMP from ADP: step 1/1. Catalyzes the reversible transfer of the terminal phosphate group between ATP and AMP. Plays an important role in cellular energy homeostasis and in adenine nucleotide metabolism. This is Adenylate kinase from Phenylobacterium zucineum (strain HLK1).